The primary structure comprises 420 residues: Serine hydroxymethyltransferase (420 aa).

(6S)-5,6,7,8-tetrahydrofolate is bound by residues L123 and G127 to L129. Position 232 is an N6-(pyridoxal phosphate)lysine (K232).

It belongs to the SHMT family. As to quaternary structure, homodimer. Pyridoxal 5'-phosphate is required as a cofactor.

The protein resides in the cytoplasm. The enzyme catalyses (6R)-5,10-methylene-5,6,7,8-tetrahydrofolate + glycine + H2O = (6S)-5,6,7,8-tetrahydrofolate + L-serine. It participates in one-carbon metabolism; tetrahydrofolate interconversion. Its pathway is amino-acid biosynthesis; glycine biosynthesis; glycine from L-serine: step 1/1. In terms of biological role, catalyzes the reversible interconversion of serine and glycine with tetrahydrofolate (THF) serving as the one-carbon carrier. This reaction serves as the major source of one-carbon groups required for the biosynthesis of purines, thymidylate, methionine, and other important biomolecules. Also exhibits THF-independent aldolase activity toward beta-hydroxyamino acids, producing glycine and aldehydes, via a retro-aldol mechanism. The polypeptide is Serine hydroxymethyltransferase (Ehrlichia chaffeensis (strain ATCC CRL-10679 / Arkansas)).